We begin with the raw amino-acid sequence, 132 residues long: Holo-[acyl-carrier-protein] synthase (132 aa).

The Mg(2+) site is built by D8 and E64.

Belongs to the P-Pant transferase superfamily. AcpS family. Requires Mg(2+) as cofactor.

Its subcellular location is the cytoplasm. The catalysed reaction is apo-[ACP] + CoA = holo-[ACP] + adenosine 3',5'-bisphosphate + H(+). Its function is as follows. Transfers the 4'-phosphopantetheine moiety from coenzyme A to a Ser of acyl-carrier-protein. The protein is Holo-[acyl-carrier-protein] synthase of Shewanella woodyi (strain ATCC 51908 / MS32).